Consider the following 365-residue polypeptide: Histidinol-phosphate aminotransferase (365 aa).

The residue at position 222 (lysine 222) is an N6-(pyridoxal phosphate)lysine.

It belongs to the class-II pyridoxal-phosphate-dependent aminotransferase family. Histidinol-phosphate aminotransferase subfamily. Homodimer. Requires pyridoxal 5'-phosphate as cofactor.

The catalysed reaction is L-histidinol phosphate + 2-oxoglutarate = 3-(imidazol-4-yl)-2-oxopropyl phosphate + L-glutamate. The protein operates within amino-acid biosynthesis; L-histidine biosynthesis; L-histidine from 5-phospho-alpha-D-ribose 1-diphosphate: step 7/9. This is Histidinol-phosphate aminotransferase from Geobacillus thermodenitrificans (strain NG80-2).